The chain runs to 101 residues: Large ribosomal subunit protein uL23 (101 aa).

The protein belongs to the universal ribosomal protein uL23 family. Part of the 50S ribosomal subunit. Contacts protein L29, and trigger factor when it is bound to the ribosome.

Its function is as follows. One of the early assembly proteins it binds 23S rRNA. One of the proteins that surrounds the polypeptide exit tunnel on the outside of the ribosome. Forms the main docking site for trigger factor binding to the ribosome. The polypeptide is Large ribosomal subunit protein uL23 (Rhodococcus jostii (strain RHA1)).